The following is a 551-amino-acid chain: Preprotein translocase subunit SCY1, chloroplastic (551 aa).

The N-terminal 67 residues, 1–67 (MITVSEVSSY…WNLGLVINSR (67 aa)), are a transit peptide targeting the chloroplast. 10 helical membrane-spanning segments follow: residues 142–162 (FLKL…PLGG), 192–212 (LGIC…FQLL), 241–261 (ASVG…RPYV), 268–288 (WVVS…YIGE), 295–315 (LGNG…PASF), 328–348 (YTGL…IVYV), 382–402 (SAGV…ATLA), 415–435 (FALT…IAFF), 482–502 (VLGS…EQIT), and 503–523 (HLTA…GCAT).

This sequence belongs to the SecY/SEC61-alpha family. Part of the Sec protein translocation apparatus. Interacts with SECE1, ALB3 and probably with SECA1.

Its subcellular location is the plastid. The protein resides in the chloroplast thylakoid membrane. Functionally, involved in protein export. Probably interacts with other proteins to allow the translocation of proteins across the chloroplast thylakoid membranes. Required for normal greening during embryogenesis. Central subunit of the protein translocation channel SecYE. Consists of two halves formed by TMs 1-5 and 6-10. These two domains form a lateral gate at the front which open onto the bilayer between TMs 2 and 7, and are clamped together by SecE at the back. The channel is closed by both a pore ring composed of hydrophobic SecY resides and a short helix (helix 2A) on the extracellular side of the membrane which forms a plug. In Arabidopsis thaliana (Mouse-ear cress), this protein is Preprotein translocase subunit SCY1, chloroplastic (SCY1).